The primary structure comprises 269 residues: Sulfur carrier protein FdhD (269 aa).

Cys-111 functions as the Cysteine persulfide intermediate in the catalytic mechanism.

It belongs to the FdhD family.

It is found in the cytoplasm. Its function is as follows. Required for formate dehydrogenase (FDH) activity. Acts as a sulfur carrier protein that transfers sulfur from IscS to the molybdenum cofactor prior to its insertion into FDH. The polypeptide is Sulfur carrier protein FdhD (Brucella abortus biovar 1 (strain 9-941)).